Reading from the N-terminus, the 729-residue chain is Fatty acid oxidation complex subunit alpha (729 aa).

The tract at residues 1–189 is enoyl-CoA hydratase/isomerase; the sequence is MLYKGDTLYL…KIGLVDGVVK (189 aa). Asp-296 contributes to the substrate binding site. Residues 311 to 729 form a 3-hydroxyacyl-CoA dehydrogenase region; that stretch reads ETPKQAAVLG…ARPVGDLKTA (419 aa). NAD(+)-binding positions include Met-324, Asp-343, 400–402, Lys-407, and Ser-429; that span reads VVE. His-450 acts as the For 3-hydroxyacyl-CoA dehydrogenase activity in catalysis. Asn-453 contacts NAD(+). 2 residues coordinate substrate: Asn-500 and Tyr-660. Positions 708–729 are disordered; that stretch reads RHNEPYYPPVEPARPVGDLKTA.

This sequence in the N-terminal section; belongs to the enoyl-CoA hydratase/isomerase family. The protein in the C-terminal section; belongs to the 3-hydroxyacyl-CoA dehydrogenase family. As to quaternary structure, heterotetramer of two alpha chains (FadB) and two beta chains (FadA).

It catalyses the reaction a (3S)-3-hydroxyacyl-CoA + NAD(+) = a 3-oxoacyl-CoA + NADH + H(+). The enzyme catalyses a (3S)-3-hydroxyacyl-CoA = a (2E)-enoyl-CoA + H2O. It carries out the reaction a 4-saturated-(3S)-3-hydroxyacyl-CoA = a (3E)-enoyl-CoA + H2O. The catalysed reaction is (3S)-3-hydroxybutanoyl-CoA = (3R)-3-hydroxybutanoyl-CoA. It catalyses the reaction a (3Z)-enoyl-CoA = a 4-saturated (2E)-enoyl-CoA. The enzyme catalyses a (3E)-enoyl-CoA = a 4-saturated (2E)-enoyl-CoA. It functions in the pathway lipid metabolism; fatty acid beta-oxidation. Functionally, involved in the aerobic and anaerobic degradation of long-chain fatty acids via beta-oxidation cycle. Catalyzes the formation of 3-oxoacyl-CoA from enoyl-CoA via L-3-hydroxyacyl-CoA. It can also use D-3-hydroxyacyl-CoA and cis-3-enoyl-CoA as substrate. The polypeptide is Fatty acid oxidation complex subunit alpha (Escherichia coli O139:H28 (strain E24377A / ETEC)).